Reading from the N-terminus, the 341-residue chain is Ferrochelatase (341 aa).

The Fe cation site is built by H189 and E293.

Belongs to the ferrochelatase family.

It is found in the cytoplasm. The enzyme catalyses heme b + 2 H(+) = protoporphyrin IX + Fe(2+). The protein operates within porphyrin-containing compound metabolism; protoheme biosynthesis; protoheme from protoporphyrin-IX: step 1/1. Catalyzes the ferrous insertion into protoporphyrin IX. This is Ferrochelatase from Pseudomonas fluorescens (strain SBW25).